The chain runs to 218 residues: Probable transaldolase (218 aa).

The active-site Schiff-base intermediate with substrate is the Lys87.

Belongs to the transaldolase family. Type 3B subfamily.

The protein resides in the cytoplasm. It catalyses the reaction D-sedoheptulose 7-phosphate + D-glyceraldehyde 3-phosphate = D-erythrose 4-phosphate + beta-D-fructose 6-phosphate. It functions in the pathway carbohydrate degradation; pentose phosphate pathway; D-glyceraldehyde 3-phosphate and beta-D-fructose 6-phosphate from D-ribose 5-phosphate and D-xylulose 5-phosphate (non-oxidative stage): step 2/3. Functionally, transaldolase is important for the balance of metabolites in the pentose-phosphate pathway. This is Probable transaldolase from Cytophaga hutchinsonii (strain ATCC 33406 / DSM 1761 / CIP 103989 / NBRC 15051 / NCIMB 9469 / D465).